The chain runs to 185 residues: uncharacterized protein (185 aa).

This is an uncharacterized protein from Methanocaldococcus jannaschii (strain ATCC 43067 / DSM 2661 / JAL-1 / JCM 10045 / NBRC 100440) (Methanococcus jannaschii).